The primary structure comprises 354 residues: Protein angel (354 aa).

Residues Val-22–Gly-59 form a disordered region.

It belongs to the CCR4/nocturin family. In terms of tissue distribution, ubiquitously expressed in embryos.

The protein is Protein angel (angel) of Drosophila melanogaster (Fruit fly).